The chain runs to 159 residues: Probable minor fimbrial protein (159 aa).

Positions 1–6 are cleaved as a propeptide — leader sequence; it reads MKKMHG. F7 bears the N-methylphenylalanine mark. A helical transmembrane segment spans residues 7–29; it reads FTLIELMIVVAIIGVLASIALMQ. Disulfide bonds link C56-C71 and C140-C153.

It belongs to the N-Me-Phe pilin family. In terms of assembly, the pili are polar flexible filaments of about 5.4 nanometers diameter and 2.5 micrometers average length; they consist of only a single polypeptide chain arranged in a helical configuration of five subunits per turn in the assembled pilus.

Its subcellular location is the fimbrium. The protein localises to the membrane. This chain is Probable minor fimbrial protein (fimZ), found in Dichelobacter nodosus (Bacteroides nodosus).